We begin with the raw amino-acid sequence, 810 residues long: Volume-regulated anion channel subunit LRRC8A (810 aa).

Met1 bears the N-acetylmethionine mark. Over 1–22 the chain is Cytoplasmic; that stretch reads MIPVTELRYFADTQPAYRILKP. A helical membrane pass occupies residues 23 to 47; that stretch reads WWDVFTDYISIVMLMIAVFGGTLQV. The Extracellular segment spans residues 48 to 123; sequence TQDKMICLPC…YENRLHWFAK (76 aa). 3 disulfides stabilise this stretch: Cys54-Cys310, Cys57-Cys65, and Cys113-Cys295. Residues Asn66 and Asn83 are each glycosylated (N-linked (GlcNAc...) asparagine). The helical transmembrane segment at 124-142 threads the bilayer; that stretch reads YFPYLVLLHTLIFLACSNF. Topologically, residues 143–264 are cytoplasmic; the sequence is WFKFPRTSSK…EEGDIVYRLY (122 aa). Thr200 carries the phosphothreonine modification. Residue Ser202 is modified to Phosphoserine. At Thr215 the chain carries Phosphothreonine. At Ser217 the chain carries Phosphoserine. Residues 265–286 traverse the membrane as a helical segment; the sequence is MRQTIIKVIKFALIICYTVYYV. The Extracellular portion of the chain corresponds to 287-316; sequence HNIKFDVDCTVDIESLTGYRTYRCAHPLAT. A helical membrane pass occupies residues 317 to 341; the sequence is LFKILASFYISLVIFYGLICMYTLW. Topologically, residues 342 to 810 are cytoplasmic; sequence WMLRRSLKKY…RLWRADKEQA (469 aa). 17 LRR repeats span residues 411–422, 423–445, 447–468, 469–492, 493–515, 518–542, 543–565, 567–589, 590–613, 614–637, 639–661, 662–684, 686–707, 708–730, 732–753, 754–776, and 778–801; these read WTLDKLRQRLTK, NAQD…VFDL, ELEV…IAQL, TGLK…AFLR, ENLR…IYSL, LEEL…GLRE, LKRL…VTDV, VHLQ…SLKK, MVNL…IFSL, HNLQ…SFQH, HRLT…IGNL, TNLE…LFYC, KLRY…IGLL, QNLQ…LFQC, KLRA…VGEL, TNLT…LGEC, and LLKR…VKER. Positions 706–707 match the Di-leucine motif motif; that stretch reads LL.

It belongs to the LRRC8 family. Heterohexamer; oligomerizes with other LRRC8 proteins (LRRC8B, LRRC8C, LRRC8D and/or LRRC8E) to form a heterohexamer. Can form homohexamers in vitro, but these have lower conductance than heterohexamers. In vivo, the subunit composition may depend primarily on expression levels, and heterooligomeric channels containing various proportions of the different LRRC8 proteins may coexist. Interact with GRB2. Interacts with NOX4; this interaction prevents the ubiquitin-mediated degradation of LRRC8A. In terms of processing, N-glycosylated. In terms of tissue distribution, ubiquitously expressed. High levels detected in the bone marrow; lower levels found in peripheral blood cells. Highly expressed in pancreatic beta cells.

It is found in the cell membrane. It localises to the lysosome membrane. The enzyme catalyses chloride(in) = chloride(out). It carries out the reaction iodide(out) = iodide(in). It catalyses the reaction taurine(out) = taurine(in). The catalysed reaction is L-aspartate(out) = L-aspartate(in). The enzyme catalyses L-glutamate(out) = L-glutamate(in). It carries out the reaction myo-inositol(out) = myo-inositol(in). It catalyses the reaction 2',3'-cGAMP(out) = 2',3'-cGAMP(in). Its activity is regulated as follows. Inhibited by (4-[(2-butyl-6,7-dichloro-2-cyclopentyl-2,3-dihydro-1-oxo-1H-inden-5-yl)oxy]butanoic acid), which plugs the channel like a cork in a bottle by binding in the extracellular selectivity filter and sterically occluding ion conduction. Lipids may block conduction in closed heterohexameric channels. Essential component of the volume-regulated anion channel (VRAC, also named VSOAC channel), an anion channel required to maintain a constant cell volume in response to extracellular or intracellular osmotic changes. The VRAC channel conducts iodide better than chloride and can also conduct organic osmolytes like taurine. Mediates efflux of amino acids, such as aspartate and glutamate, in response to osmotic stress. In complex with LRRC8C or LRRC8E, acts as a transporter of immunoreactive cyclic dinucleotide GMP-AMP (2'-3'-cGAMP), an immune messenger produced in response to DNA virus in the cytosol: mediates both import and export of 2'-3'-cGAMP, thereby promoting transfer of 2'-3'-cGAMP to bystander cells. In contrast, complexes containing LRRC8D inhibit transport of 2'-3'-cGAMP. Required for in vivo channel activity, together with at least one other family member (LRRC8B, LRRC8C, LRRC8D or LRRC8E); channel characteristics depend on the precise subunit composition. Can form functional channels by itself (in vitro). Involved in B-cell development: required for the pro-B cell to pre-B cell transition. Also required for T-cell development. Required for myoblast differentiation: VRAC activity promotes membrane hyperpolarization and regulates insulin-stimulated glucose metabolism and oxygen consumption. Also acts as a regulator of glucose-sensing in pancreatic beta cells: VRAC currents, generated in response to hypotonicity- or glucose-induced beta cell swelling, depolarize cells, thereby causing electrical excitation, leading to increase glucose sensitivity and insulin secretion. Also plays a role in lysosome homeostasis by forming functional lysosomal VRAC channels in response to low cytoplasmic ionic strength condition: lysosomal VRAC channels are necessary for the formation of large lysosome-derived vacuoles, which store and then expel excess water to maintain cytosolic water homeostasis. Acts as a key factor in NLRP3 inflammasome activation by modulating itaconate efflux and mitochondria function. This Mus musculus (Mouse) protein is Volume-regulated anion channel subunit LRRC8A.